Here is a 547-residue protein sequence, read N- to C-terminus: (R)-citramalate synthase (547 aa).

Positions 8 to 278 constitute a Pyruvate carboxyltransferase domain; it reads LWLYDTTLRD…YDCIEPEKLA (271 aa).

The protein belongs to the alpha-IPM synthase/homocitrate synthase family.

It carries out the reaction pyruvate + acetyl-CoA + H2O = (3R)-citramalate + CoA + H(+). It participates in amino-acid biosynthesis; L-isoleucine biosynthesis; 2-oxobutanoate from pyruvate: step 1/3. Functionally, catalyzes the condensation of pyruvate and acetyl-coenzyme A to form (R)-citramalate. This chain is (R)-citramalate synthase, found in Synechocystis sp. (strain ATCC 27184 / PCC 6803 / Kazusa).